Consider the following 283-residue polypeptide: Undecaprenyl-diphosphatase (283 aa).

A run of 6 helical transmembrane segments spans residues 47-67 (PGLS…IAYF), 94-114 (LGIA…CIKL), 127-147 (VPAI…AELL), 197-217 (AARF…LVEL), 227-247 (GGVL…WLAI), and 261-281 (IFVV…SGSA).

Belongs to the UppP family.

It localises to the cell inner membrane. It carries out the reaction di-trans,octa-cis-undecaprenyl diphosphate + H2O = di-trans,octa-cis-undecaprenyl phosphate + phosphate + H(+). In terms of biological role, catalyzes the dephosphorylation of undecaprenyl diphosphate (UPP). Confers resistance to bacitracin. The polypeptide is Undecaprenyl-diphosphatase (Synechococcus sp. (strain CC9311)).